Here is a 668-residue protein sequence, read N- to C-terminus: DNA ligase (668 aa).

NAD(+) is bound by residues Asp-31–Asp-35, Ser-80–Leu-81, and Glu-112. Catalysis depends on Lys-114, which acts as the N6-AMP-lysine intermediate. NAD(+) is bound by residues Arg-135, Glu-172, Lys-289, and Lys-313. Zn(2+)-binding residues include Cys-407, Cys-410, Cys-425, and Cys-431. The region spanning Ser-591 to Asn-668 is the BRCT domain.

The protein belongs to the NAD-dependent DNA ligase family. LigA subfamily. The cofactor is Mg(2+). Mn(2+) serves as cofactor.

It carries out the reaction NAD(+) + (deoxyribonucleotide)n-3'-hydroxyl + 5'-phospho-(deoxyribonucleotide)m = (deoxyribonucleotide)n+m + AMP + beta-nicotinamide D-nucleotide.. DNA ligase that catalyzes the formation of phosphodiester linkages between 5'-phosphoryl and 3'-hydroxyl groups in double-stranded DNA using NAD as a coenzyme and as the energy source for the reaction. It is essential for DNA replication and repair of damaged DNA. The protein is DNA ligase of Aliivibrio fischeri (strain ATCC 700601 / ES114) (Vibrio fischeri).